The primary structure comprises 238 residues: Ribonuclease PH (238 aa).

Phosphate-binding positions include Arg-86 and 124-126 (GTR).

It belongs to the RNase PH family. As to quaternary structure, homohexameric ring arranged as a trimer of dimers.

The catalysed reaction is tRNA(n+1) + phosphate = tRNA(n) + a ribonucleoside 5'-diphosphate. Phosphorolytic 3'-5' exoribonuclease that plays an important role in tRNA 3'-end maturation. Removes nucleotide residues following the 3'-CCA terminus of tRNAs; can also add nucleotides to the ends of RNA molecules by using nucleoside diphosphates as substrates, but this may not be physiologically important. Probably plays a role in initiation of 16S rRNA degradation (leading to ribosome degradation) during starvation. This Enterobacter sp. (strain 638) protein is Ribonuclease PH.